The following is a 507-amino-acid chain: ATP synthase subunit alpha, chloroplastic (507 aa).

170–177 (GDRQTGKT) contacts ATP. Position 257 is a phosphothreonine (Thr257).

This sequence belongs to the ATPase alpha/beta chains family. F-type ATPases have 2 components, CF(1) - the catalytic core - and CF(0) - the membrane proton channel. CF(1) has five subunits: alpha(3), beta(3), gamma(1), delta(1), epsilon(1). CF(0) has four main subunits: a, b, b' and c.

It is found in the plastid. The protein localises to the chloroplast thylakoid membrane. The enzyme catalyses ATP + H2O + 4 H(+)(in) = ADP + phosphate + 5 H(+)(out). In terms of biological role, produces ATP from ADP in the presence of a proton gradient across the membrane. The alpha chain is a regulatory subunit. The protein is ATP synthase subunit alpha, chloroplastic of Aethionema grandiflorum (Persian stone-cress).